A 254-amino-acid chain; its full sequence is Small ribosomal subunit protein uS2 (254 aa).

It belongs to the universal ribosomal protein uS2 family.

In Borrelia duttonii (strain Ly), this protein is Small ribosomal subunit protein uS2.